The following is a 309-amino-acid chain: PI-PLC X domain-containing protein 1 (309 aa).

The PI-PLC X-box domain maps to 17–193 (HMWDIPLWNL…QVILSYDDES (177 aa)).

The chain is PI-PLC X domain-containing protein 1 (plcxd1) from Danio rerio (Zebrafish).